Consider the following 1207-residue polypeptide: DNA-directed RNA polymerase subunit beta' (1207 aa).

Zn(2+) is bound by residues Cys60, Cys62, Cys75, and Cys78. The Mg(2+) site is built by Asp450, Asp452, and Asp454. Positions 818, 892, 899, and 902 each coordinate Zn(2+).

This sequence belongs to the RNA polymerase beta' chain family. In terms of assembly, the RNAP catalytic core consists of 2 alpha, 1 beta, 1 beta' and 1 omega subunit. When a sigma factor is associated with the core the holoenzyme is formed, which can initiate transcription. It depends on Mg(2+) as a cofactor. Requires Zn(2+) as cofactor.

The enzyme catalyses RNA(n) + a ribonucleoside 5'-triphosphate = RNA(n+1) + diphosphate. In terms of biological role, DNA-dependent RNA polymerase catalyzes the transcription of DNA into RNA using the four ribonucleoside triphosphates as substrates. The polypeptide is DNA-directed RNA polymerase subunit beta' (Lactococcus lactis subsp. cremoris (strain SK11)).